The primary structure comprises 31 residues: Photosystem II reaction center protein T (31 aa).

A helical transmembrane segment spans residues 3–23 (SAAYILVLALALGVIFFAIAF).

Belongs to the PsbT family. As to quaternary structure, PSII is composed of 1 copy each of membrane proteins PsbA, PsbB, PsbC, PsbD, PsbE, PsbF, PsbH, PsbI, PsbJ, PsbK, PsbL, PsbM, PsbT, PsbX, PsbY, PsbZ, Psb30/Ycf12, peripheral proteins PsbO, CyanoQ (PsbQ), PsbU, PsbV and a large number of cofactors. It forms dimeric complexes.

Its subcellular location is the cellular thylakoid membrane. Functionally, found at the monomer-monomer interface of the photosystem II (PS II) dimer, plays a role in assembly and dimerization of PSII. PSII is a light-driven water plastoquinone oxidoreductase, using light energy to abstract electrons from H(2)O, generating a proton gradient subsequently used for ATP formation. The sequence is that of Photosystem II reaction center protein T from Trichodesmium erythraeum (strain IMS101).